The primary structure comprises 419 residues: Probable dual-specificity RNA methyltransferase RlmN (419 aa).

The disordered stretch occupies residues 1–21 (MTAESDSPDGPVSAGTGRPVR). The active-site Proton acceptor is the Glu-124. Residues 130–369 (YPDRATVCVS…ATTVRDTRGR (240 aa)) form the Radical SAM core domain. Cys-137 and Cys-375 form a disulfide bridge. The [4Fe-4S] cluster site is built by Cys-144, Cys-148, and Cys-151. Residues 199–200 (GE), Ser-233, 256–258 (SLH), and Asn-332 contribute to the S-adenosyl-L-methionine site. The active-site S-methylcysteine intermediate is Cys-375. Residues 383–419 (AGRARRVESARPVESARPVGVAGAASGSPAHGSRVLR) are disordered. Positions 397–419 (SARPVGVAGAASGSPAHGSRVLR) are enriched in low complexity.

Belongs to the radical SAM superfamily. RlmN family. [4Fe-4S] cluster serves as cofactor.

It is found in the cytoplasm. The catalysed reaction is adenosine(2503) in 23S rRNA + 2 reduced [2Fe-2S]-[ferredoxin] + 2 S-adenosyl-L-methionine = 2-methyladenosine(2503) in 23S rRNA + 5'-deoxyadenosine + L-methionine + 2 oxidized [2Fe-2S]-[ferredoxin] + S-adenosyl-L-homocysteine. It catalyses the reaction adenosine(37) in tRNA + 2 reduced [2Fe-2S]-[ferredoxin] + 2 S-adenosyl-L-methionine = 2-methyladenosine(37) in tRNA + 5'-deoxyadenosine + L-methionine + 2 oxidized [2Fe-2S]-[ferredoxin] + S-adenosyl-L-homocysteine. In terms of biological role, specifically methylates position 2 of adenine 2503 in 23S rRNA and position 2 of adenine 37 in tRNAs. In Frankia alni (strain DSM 45986 / CECT 9034 / ACN14a), this protein is Probable dual-specificity RNA methyltransferase RlmN.